The sequence spans 380 residues: Cytochrome b (380 aa).

The next 4 helical transmembrane spans lie at 34 to 54 (FGSL…LLAM), 78 to 99 (WLIR…YLHI), 114 to 134 (WNTG…GYVL), and 179 to 199 (FFAL…IHLT). Residues His84 and His98 each coordinate heme b. Heme b contacts are provided by His183 and His197. A ubiquinone is bound at residue His202. The next 4 helical transmembrane spans lie at 227 to 247 (LKDA…ALFS), 289 to 309 (LGGV…PLLH), 321 to 341 (LSQL…WIGS), and 348 to 368 (FIII…ILFP).

It belongs to the cytochrome b family. As to quaternary structure, the cytochrome bc1 complex contains 11 subunits: 3 respiratory subunits (MT-CYB, CYC1 and UQCRFS1), 2 core proteins (UQCRC1 and UQCRC2) and 6 low-molecular weight proteins (UQCRH/QCR6, UQCRB/QCR7, UQCRQ/QCR8, UQCR10/QCR9, UQCR11/QCR10 and a cleavage product of UQCRFS1). This cytochrome bc1 complex then forms a dimer. It depends on heme b as a cofactor.

The protein resides in the mitochondrion inner membrane. Functionally, component of the ubiquinol-cytochrome c reductase complex (complex III or cytochrome b-c1 complex) that is part of the mitochondrial respiratory chain. The b-c1 complex mediates electron transfer from ubiquinol to cytochrome c. Contributes to the generation of a proton gradient across the mitochondrial membrane that is then used for ATP synthesis. This is Cytochrome b (MT-CYB) from Oceanodroma tethys (Wedge-rumped storm-petrel).